A 252-amino-acid chain; its full sequence is Indole-3-glycerol phosphate synthase (252 aa).

The protein belongs to the TrpC family.

The catalysed reaction is 1-(2-carboxyphenylamino)-1-deoxy-D-ribulose 5-phosphate + H(+) = (1S,2R)-1-C-(indol-3-yl)glycerol 3-phosphate + CO2 + H2O. It functions in the pathway amino-acid biosynthesis; L-tryptophan biosynthesis; L-tryptophan from chorismate: step 4/5. The polypeptide is Indole-3-glycerol phosphate synthase (Listeria monocytogenes serotype 4a (strain HCC23)).